The primary structure comprises 276 residues: Shikimate dehydrogenase (NADP(+)) (276 aa).

Shikimate-binding positions include 15-17 (SMS) and Thr-63. Catalysis depends on Lys-67, which acts as the Proton acceptor. Asp-79 contacts NADP(+). Positions 88 and 103 each coordinate shikimate. NADP(+)-binding positions include 130 to 134 (GAGGA), 154 to 159 (NRTLSR), and Ile-217. Tyr-219 is a shikimate binding site. Gly-240 lines the NADP(+) pocket.

This sequence belongs to the shikimate dehydrogenase family. In terms of assembly, homodimer.

It catalyses the reaction shikimate + NADP(+) = 3-dehydroshikimate + NADPH + H(+). It functions in the pathway metabolic intermediate biosynthesis; chorismate biosynthesis; chorismate from D-erythrose 4-phosphate and phosphoenolpyruvate: step 4/7. In terms of biological role, involved in the biosynthesis of the chorismate, which leads to the biosynthesis of aromatic amino acids. Catalyzes the reversible NADPH linked reduction of 3-dehydroshikimate (DHSA) to yield shikimate (SA). The sequence is that of Shikimate dehydrogenase (NADP(+)) from Oceanobacillus iheyensis (strain DSM 14371 / CIP 107618 / JCM 11309 / KCTC 3954 / HTE831).